A 388-amino-acid chain; its full sequence is Sulfate adenylyltransferase (388 aa).

It belongs to the sulfate adenylyltransferase family.

The catalysed reaction is sulfate + ATP + H(+) = adenosine 5'-phosphosulfate + diphosphate. It functions in the pathway sulfur metabolism; hydrogen sulfide biosynthesis; sulfite from sulfate: step 1/3. The sequence is that of Sulfate adenylyltransferase from Acaryochloris marina (strain MBIC 11017).